A 565-amino-acid polypeptide reads, in one-letter code: Proline--tRNA ligase (565 aa).

It belongs to the class-II aminoacyl-tRNA synthetase family. ProS type 1 subfamily. Homodimer.

The protein resides in the cytoplasm. It catalyses the reaction tRNA(Pro) + L-proline + ATP = L-prolyl-tRNA(Pro) + AMP + diphosphate. In terms of biological role, catalyzes the attachment of proline to tRNA(Pro) in a two-step reaction: proline is first activated by ATP to form Pro-AMP and then transferred to the acceptor end of tRNA(Pro). As ProRS can inadvertently accommodate and process non-cognate amino acids such as alanine and cysteine, to avoid such errors it has two additional distinct editing activities against alanine. One activity is designated as 'pretransfer' editing and involves the tRNA(Pro)-independent hydrolysis of activated Ala-AMP. The other activity is designated 'posttransfer' editing and involves deacylation of mischarged Ala-tRNA(Pro). The misacylated Cys-tRNA(Pro) is not edited by ProRS. This chain is Proline--tRNA ligase, found in Lactobacillus acidophilus (strain ATCC 700396 / NCK56 / N2 / NCFM).